The sequence spans 496 residues: Cytochrome P450 71B1 (496 aa).

C436 is a heme binding site.

It belongs to the cytochrome P450 family. It depends on heme as a cofactor.

The protein is Cytochrome P450 71B1 (CYP71B1) of Thlaspi arvense (Field penny-cress).